The primary structure comprises 231 residues: Ribonuclease 3 (231 aa).

In terms of domain architecture, RNase III spans 12 to 139 (LKAFLQKNNI…LIAAIYLDQG (128 aa)). Glutamate 52 is a binding site for Mg(2+). The active site involves aspartate 56. The Mg(2+) site is built by aspartate 125 and glutamate 128. Residue glutamate 128 is part of the active site. Residues 165-231 (DPKSELQEYF…AANALSKLKT (67 aa)) enclose the DRBM domain.

This sequence belongs to the ribonuclease III family. Homodimer. The cofactor is Mg(2+).

It is found in the cytoplasm. The enzyme catalyses Endonucleolytic cleavage to 5'-phosphomonoester.. Digests double-stranded RNA. Involved in the processing of primary rRNA transcript to yield the immediate precursors to the large and small rRNAs (23S and 16S). Processes some mRNAs, and tRNAs when they are encoded in the rRNA operon. Processes pre-crRNA and tracrRNA of type II CRISPR loci if present in the organism. The polypeptide is Ribonuclease 3 (Mycoplasmopsis synoviae (strain 53) (Mycoplasma synoviae)).